Reading from the N-terminus, the 605-residue chain is Elongation factor 4 (605 aa).

The region spanning 8–190 (RRVRNFCIVA…AIITRIPPPQ (183 aa)) is the tr-type G domain. GTP contacts are provided by residues 20–25 (DHGKST) and 137–140 (NKID).

Belongs to the TRAFAC class translation factor GTPase superfamily. Classic translation factor GTPase family. LepA subfamily.

The protein localises to the cell inner membrane. The catalysed reaction is GTP + H2O = GDP + phosphate + H(+). Required for accurate and efficient protein synthesis under certain stress conditions. May act as a fidelity factor of the translation reaction, by catalyzing a one-codon backward translocation of tRNAs on improperly translocated ribosomes. Back-translocation proceeds from a post-translocation (POST) complex to a pre-translocation (PRE) complex, thus giving elongation factor G a second chance to translocate the tRNAs correctly. Binds to ribosomes in a GTP-dependent manner. The sequence is that of Elongation factor 4 from Treponema pallidum (strain Nichols).